A 205-amino-acid chain; its full sequence is Golgi to ER traffic protein 1 (205 aa).

Over 1–9 (MFELQPSSI) the chain is Lumenal. The helical transmembrane segment at 10-29 (VVLVFCVLAIKVCISLIGKT) threads the bilayer. Topologically, residues 30–116 (TIQDRIWYLY…QISKLVNLAI (87 aa)) are cytoplasmic. A coiled-coil region spans residues 53-103 (ALAQKREELVRVNKERRAISAQDEYAKWTKLNRQFDKLNSEVNDLAEATSS). A helical membrane pass occupies residues 117 to 137 (AATTTAPIWFSRIWYRKVVLF). Residues 138–161 (YLPPKVFPYYIEWVLALPFIVTGG) lie on the Lumenal side of the membrane. A helical membrane pass occupies residues 162–178 (VGLTVWMFALNSVLSSL). At 179–205 (EFLIKFYLEEPVKKPEAPAASEAQTKQ) the chain is on the cytoplasmic side.

This sequence belongs to the WRB/GET1 family. Component of the Golgi to ER traffic (GET) complex, which is composed of GET1, GET2 and GET3. Within the complex, GET1 and GET2 form a heterotetramer which is stabilized by phosphatidylinositol binding and which binds to the GET3 homodimer.

Its subcellular location is the endoplasmic reticulum membrane. It localises to the golgi apparatus membrane. Functionally, required for the post-translational delivery of tail-anchored (TA) proteins to the endoplasmic reticulum. Together with GET2, acts as a membrane receptor for soluble GET3, which recognizes and selectively binds the transmembrane domain of TA proteins in the cytosol. The GET complex cooperates with the HDEL receptor ERD2 to mediate the ATP-dependent retrieval of resident ER proteins that contain a C-terminal H-D-E-L retention signal from the Golgi to the ER. In Clavispora lusitaniae (strain ATCC 42720) (Yeast), this protein is Golgi to ER traffic protein 1.